Here is a 238-residue protein sequence, read N- to C-terminus: Large ribosomal subunit protein uL5c (238 aa).

Belongs to the universal ribosomal protein uL5 family. As to quaternary structure, part of the 50S ribosomal subunit; contacts the 5S rRNA.

It localises to the plastid. The protein resides in the chloroplast. Binds 5S rRNA, forms part of the central protuberance of the 50S subunit. This chain is Large ribosomal subunit protein uL5c (rpl5), found in Trieres chinensis (Marine centric diatom).